We begin with the raw amino-acid sequence, 206 residues long: Ribosome maturation factor RimP (206 aa).

Belongs to the RimP family.

It is found in the cytoplasm. Functionally, required for maturation of 30S ribosomal subunits. This chain is Ribosome maturation factor RimP, found in Paracoccus denitrificans (strain Pd 1222).